The following is a 616-amino-acid chain: Dihydroxy-acid dehydratase (616 aa).

Asp81 serves as a coordination point for Mg(2+). Position 122 (Cys122) interacts with [2Fe-2S] cluster. Mg(2+) is bound by residues Asp123 and Lys124. Lys124 carries the N6-carboxylysine modification. Cys195 contacts [2Fe-2S] cluster. Residue Glu491 participates in Mg(2+) binding. Ser517 acts as the Proton acceptor in catalysis.

The protein belongs to the IlvD/Edd family. As to quaternary structure, homodimer. Requires [2Fe-2S] cluster as cofactor. Mg(2+) is required as a cofactor.

It carries out the reaction (2R)-2,3-dihydroxy-3-methylbutanoate = 3-methyl-2-oxobutanoate + H2O. The catalysed reaction is (2R,3R)-2,3-dihydroxy-3-methylpentanoate = (S)-3-methyl-2-oxopentanoate + H2O. The protein operates within amino-acid biosynthesis; L-isoleucine biosynthesis; L-isoleucine from 2-oxobutanoate: step 3/4. Its pathway is amino-acid biosynthesis; L-valine biosynthesis; L-valine from pyruvate: step 3/4. In terms of biological role, functions in the biosynthesis of branched-chain amino acids. Catalyzes the dehydration of (2R,3R)-2,3-dihydroxy-3-methylpentanoate (2,3-dihydroxy-3-methylvalerate) into 2-oxo-3-methylpentanoate (2-oxo-3-methylvalerate) and of (2R)-2,3-dihydroxy-3-methylbutanoate (2,3-dihydroxyisovalerate) into 2-oxo-3-methylbutanoate (2-oxoisovalerate), the penultimate precursor to L-isoleucine and L-valine, respectively. The protein is Dihydroxy-acid dehydratase of Pectobacterium carotovorum subsp. carotovorum (strain PC1).